The following is a 331-amino-acid chain: Biotin synthase (331 aa).

One can recognise a Radical SAM core domain in the interval 51–278 (QTIQLSTLMS…KSYVRLSAGR (228 aa)). 3 residues coordinate [4Fe-4S] cluster: Cys66, Cys70, and Cys73. [2Fe-2S] cluster-binding residues include Cys110, Cys141, Cys201, and Arg273.

Belongs to the radical SAM superfamily. Biotin synthase family. As to quaternary structure, homodimer. Requires [4Fe-4S] cluster as cofactor. [2Fe-2S] cluster serves as cofactor.

It carries out the reaction (4R,5S)-dethiobiotin + (sulfur carrier)-SH + 2 reduced [2Fe-2S]-[ferredoxin] + 2 S-adenosyl-L-methionine = (sulfur carrier)-H + biotin + 2 5'-deoxyadenosine + 2 L-methionine + 2 oxidized [2Fe-2S]-[ferredoxin]. It functions in the pathway cofactor biosynthesis; biotin biosynthesis; biotin from 7,8-diaminononanoate: step 2/2. Functionally, catalyzes the conversion of dethiobiotin (DTB) to biotin by the insertion of a sulfur atom into dethiobiotin via a radical-based mechanism. The protein is Biotin synthase of Histophilus somni (strain 129Pt) (Haemophilus somnus).